The chain runs to 291 residues: Light-independent protochlorophyllide reductase iron-sulfur ATP-binding protein (291 aa).

ATP is bound by residues 10–15 (GIGKST) and K39. S14 provides a ligand contact to Mg(2+). Residues C95 and C129 each coordinate [4Fe-4S] cluster. 180–181 (NR) is a binding site for ATP.

It belongs to the NifH/BchL/ChlL family. As to quaternary structure, homodimer. Protochlorophyllide reductase is composed of three subunits; ChlL, ChlN and ChlB. [4Fe-4S] cluster is required as a cofactor.

It is found in the plastid. Its subcellular location is the chloroplast. The catalysed reaction is chlorophyllide a + oxidized 2[4Fe-4S]-[ferredoxin] + 2 ADP + 2 phosphate = protochlorophyllide a + reduced 2[4Fe-4S]-[ferredoxin] + 2 ATP + 2 H2O. The protein operates within porphyrin-containing compound metabolism; chlorophyll biosynthesis (light-independent). Component of the dark-operative protochlorophyllide reductase (DPOR) that uses Mg-ATP and reduced ferredoxin to reduce ring D of protochlorophyllide (Pchlide) to form chlorophyllide a (Chlide). This reaction is light-independent. The L component serves as a unique electron donor to the NB-component of the complex, and binds Mg-ATP. The sequence is that of Light-independent protochlorophyllide reductase iron-sulfur ATP-binding protein from Pinus koraiensis (Korean pine).